The sequence spans 165 residues: V-type proton ATPase 16 kDa proteolipid subunit (165 aa).

Residues 1 to 12 are Lumenal-facing; that stretch reads MSTVFNGDETAP. Residues 13 to 33 form a helical membrane-spanning segment; it reads FFGFLGAAAALVFSCMGAAYG. Residues 34 to 55 lie on the Cytoplasmic side of the membrane; that stretch reads TAKSGVGVASMGVMRPELVMKS. Residues 56–76 form a helical membrane-spanning segment; the sequence is IVPVVMAGVLGIYGLIIAVII. At 77-95 the chain is on the lumenal side; the sequence is STGINPKAKSYYLFDGYAH. A helical transmembrane segment spans residues 96 to 117; sequence LSSGLACGLAGLSAGMAIGIVG. Over 118-129 the chain is Cytoplasmic; the sequence is DAGVRANAQQPK. Residues 130–155 traverse the membrane as a helical segment; that stretch reads LFVGMILILIFAEALALYGLIVGIIL. Residues 156 to 165 are Lumenal-facing; that stretch reads SSRAGQSRAD.

Belongs to the V-ATPase proteolipid subunit family. V-ATPase is a heteromultimeric enzyme composed of a peripheral catalytic V1 complex (main components: subunits A, B, C, D, E, and F) attached to an integral membrane V0 proton pore complex (main component: the proteolipid protein; which is present as a hexamer that forms the proton-conducting pore).

The protein localises to the vacuole membrane. In terms of biological role, proton-conducting pore forming subunit of the membrane integral V0 complex of vacuolar ATPase. V-ATPase is responsible for acidifying a variety of intracellular compartments in eukaryotic cells. This Mesembryanthemum crystallinum (Common ice plant) protein is V-type proton ATPase 16 kDa proteolipid subunit (VMAC1).